A 594-amino-acid chain; its full sequence is P-granule-associated novel protein 1 (594 aa).

An N-terminal signal peptide occupies residues 1–18 (MRSLLSFVLLALARIAIS). The Extracellular portion of the chain corresponds to 19-513 (EETKSCIDIE…PEEEEVYRSG (495 aa)). LRR repeat units lie at residues 78–101 (GTEL…LFEN), 103–124 (FAKQ…SFQS), 125–149 (LGGS…LFTG), 150–173 (LKSL…AFEE), 175–197 (KKVE…TFDG), 198–221 (MKNL…AFRG), 222–245 (LNSL…IFSA), 246–269 (LKNL…SFPK), 271–290 (EKLV…KLKD), 291–315 (LPSL…MFGL), 318–341 (SDRI…AFQH), 343–365 (PNLI…SPSQ), 374–397 (LKKL…ELPK), 399–419 (LSSL…ALEG), and 420–442 (MEIK…TFDS). Residues 514–534 (WITVAATILTIVTIVIMVIIA) traverse the membrane as a helical segment. Topologically, residues 535–594 (MLYFKDARYQFPLRGRRSDSDLHKLIENDPLNIASDSILVVPAMPKRNTGPKKTVRFQNF) are cytoplasmic.

Interacts with glh-1. Interacts (via LRR regions) with myrf-1 (via C-terminus); the interaction promotes the role of myrf-1 in the synaptic remodeling of DD GABAergic motor neurons at the cell membrane. As to expression, expressed in the germline and somatic cells. Expressed in the germline and somatic cells. Expressed at higher levels in germline cells relative to somatic cells. In terms of tissue distribution, expressed in germline cells. As to expression, highly expressed in the pharynx and at lower levels in the intestine, but not detected in other tissues. Other studies suggest a broader expression pattern in somatic tissues: from embryogenesis to adult stages, expressed strongly in body wall muscle, vulva, somatic gonad and pharynx, at lower levels in the nerve ring, hypodermis, and rectal epithelia, and very weakly in the intestine.

It is found in the cytoplasm. It localises to the apical cell membrane. Regulates diverse developmental processes including larval molting and gonad maturation. Its function is as follows. Promotes the localization of myrf-1 and myrf-2 to the cell membrane. In association with myrf-1, promotes the synaptic remodeling of DD GABAergic motor neurons whereby new synapses form in the dorsal processes of DD neurons. This Caenorhabditis elegans protein is P-granule-associated novel protein 1.